The sequence spans 764 residues: 5-methyltetrahydropteroyltriglutamate--homocysteine methyltransferase (764 aa).

5-methyltetrahydropteroyltri-L-glutamate-binding positions include 16 to 19 (RELK) and lysine 112. Residues 431-433 (IGS) and glutamate 484 each bind L-homocysteine. L-methionine-binding positions include 431 to 433 (IGS) and glutamate 484. Residues 515–516 (RC) and tryptophan 561 each bind 5-methyltetrahydropteroyltri-L-glutamate. Residue aspartate 599 coordinates L-homocysteine. An L-methionine-binding site is contributed by aspartate 599. Glutamate 605 contacts 5-methyltetrahydropteroyltri-L-glutamate. 3 residues coordinate Zn(2+): histidine 641, cysteine 643, and glutamate 665. Histidine 694 (proton donor) is an active-site residue. Cysteine 726 lines the Zn(2+) pocket.

Belongs to the vitamin-B12 independent methionine synthase family. The cofactor is Zn(2+).

The catalysed reaction is 5-methyltetrahydropteroyltri-L-glutamate + L-homocysteine = tetrahydropteroyltri-L-glutamate + L-methionine. It functions in the pathway amino-acid biosynthesis; L-methionine biosynthesis via de novo pathway; L-methionine from L-homocysteine (MetE route): step 1/1. Its function is as follows. Catalyzes the transfer of a methyl group from 5-methyltetrahydrofolate to homocysteine resulting in methionine formation. This chain is 5-methyltetrahydropteroyltriglutamate--homocysteine methyltransferase, found in Paraburkholderia xenovorans (strain LB400).